An 875-amino-acid polypeptide reads, in one-letter code: MSKSTAEIRQAFLDFFHSKGHQVVSSSSLVPNNDPTLLFTNAGMNQFKDVFLGLDKRAYSRATTSQRCVRAGGKHNDLENVGYTARHHTFFEMLGNFSFGDYFKHDAINFAWELLTSEQWFNLPKEKLWVTVYETDDEAYNIWANEVGVPHERIIRIGDNKGGAFASDNFWQMGDTGPCGPCSEIFFDHGDHIWGGPPGSAEEDGDRYIEIWNIVFMQFNRQSDGTMLPLPKPSVDTGMGLERIAAVLQHVNSNYEIDLFRDLIAAVADVTGATDLSSKSLRVIADHIRSCAFLISDGVIPSNENRGYVLRRIIRRAIRHGNMLGAKETFFYKLVAPLIAVMGPAAAELKQQQAMVEQVLKTEEEQFARTLERGLALLDDELSKLTGDTLDGETAFRLYDTYGFPVDLTADVCRERNLKVDEAGFEQAMEAQRRRARESSGFGADYNSLIRVDSASQFSGYDHVQQHATVTALFRNGEAVDEIHAGEEAVVVLNRTPFYGESGGQVGDKGELKNATATFSVTDTQKYGQAIGHVGILTTGTLRVNHSVEALVDVVRRNRIRLNHSATHLLHAALRNVLGEHVAQKGSLVNDKYLRFDFSHFEAMKPEQIRLVEDLVNEQIRRNMPVQTEVMELDAAKEKGAMALFGEKYDDQVRVLTMGDFSTELCGGTHASRTGDIGLFRILTESGTAAGIRRIEAVTGEGAIALLHQQSDLLQDVAHLVKGDIHNLADKVRAVLDRSKMLERELQQLKDQQAAQESASLSSSAKLINGVKLLVSQLDNVEPKMLRTMVDDLKNQLGSAIIVLATTTDDKVSLIVGVTKDLTGKVKAGELIADIAQQVGGKGGGRPDMAQAGGTDVQALPAALASVEAWVASRM.

Zn(2+) contacts are provided by H564, H568, C666, and H670.

It belongs to the class-II aminoacyl-tRNA synthetase family. Homotetramer. Requires Zn(2+) as cofactor.

Its subcellular location is the cytoplasm. The enzyme catalyses tRNA(Ala) + L-alanine + ATP = L-alanyl-tRNA(Ala) + AMP + diphosphate. Its function is as follows. Catalyzes the attachment of alanine to tRNA(Ala) in a two-step reaction: alanine is first activated by ATP to form Ala-AMP and then transferred to the acceptor end of tRNA(Ala). Also edits incorrectly charged Ser-tRNA(Ala) and Gly-tRNA(Ala) via its editing domain. The protein is Alanine--tRNA ligase of Yersinia pseudotuberculosis serotype O:1b (strain IP 31758).